We begin with the raw amino-acid sequence, 474 residues long: Trehalose-6-phosphate synthase (474 aa).

Arg10 contacts D-glucose 6-phosphate. 22 to 23 (GG) contacts UDP-alpha-D-glucose. D-glucose 6-phosphate contacts are provided by Tyr77 and Asp131. 2 residues coordinate UDP-alpha-D-glucose: Arg263 and Lys268. A D-glucose 6-phosphate-binding site is contributed by Arg301. Residues Phe340 and 366 to 370 (LVAKE) each bind UDP-alpha-D-glucose.

This sequence belongs to the glycosyltransferase 20 family. As to quaternary structure, homotetramer.

It catalyses the reaction D-glucose 6-phosphate + UDP-alpha-D-glucose = alpha,alpha-trehalose 6-phosphate + UDP + H(+). Its pathway is glycan biosynthesis; trehalose biosynthesis. Probably involved in the osmoprotection via the biosynthesis of trehalose. Catalyzes the transfer of glucose from UDP-alpha-D-glucose (UDP-Glc) to D-glucose 6-phosphate (Glc-6-P) to form trehalose-6-phosphate. Acts with retention of the anomeric configuration of the UDP-sugar donor. The protein is Trehalose-6-phosphate synthase of Escherichia coli O157:H7.